A 615-amino-acid polypeptide reads, in one-letter code: DNA mismatch repair protein MutL (615 aa).

Residues 363–397 form a disordered region; that stretch reads FAEPAAREPVAPRYTPAPASGSRPAAPWPNAQPGY. Over residues 364–391 the composition is skewed to low complexity; that stretch reads AEPAAREPVAPRYTPAPASGSRPAAPWP.

The protein belongs to the DNA mismatch repair MutL/HexB family.

Functionally, this protein is involved in the repair of mismatches in DNA. It is required for dam-dependent methyl-directed DNA mismatch repair. May act as a 'molecular matchmaker', a protein that promotes the formation of a stable complex between two or more DNA-binding proteins in an ATP-dependent manner without itself being part of a final effector complex. This Escherichia coli (strain ATCC 8739 / DSM 1576 / NBRC 3972 / NCIMB 8545 / WDCM 00012 / Crooks) protein is DNA mismatch repair protein MutL.